We begin with the raw amino-acid sequence, 148 residues long: Large ribosomal subunit protein uL13 (148 aa).

The protein belongs to the universal ribosomal protein uL13 family. As to quaternary structure, part of the 50S ribosomal subunit.

Its function is as follows. This protein is one of the early assembly proteins of the 50S ribosomal subunit, although it is not seen to bind rRNA by itself. It is important during the early stages of 50S assembly. The chain is Large ribosomal subunit protein uL13 from Lacticaseibacillus casei (strain BL23) (Lactobacillus casei).